A 200-amino-acid chain; its full sequence is Large ribosomal subunit protein uL4 (200 aa).

The disordered stretch occupies residues 43–71 (RAQKTRAEVSGSGKKPWRQKGTGRARSGD).

The protein belongs to the universal ribosomal protein uL4 family. Part of the 50S ribosomal subunit.

Its function is as follows. One of the primary rRNA binding proteins, this protein initially binds near the 5'-end of the 23S rRNA. It is important during the early stages of 50S assembly. It makes multiple contacts with different domains of the 23S rRNA in the assembled 50S subunit and ribosome. Functionally, forms part of the polypeptide exit tunnel. In Actinobacillus pleuropneumoniae serotype 5b (strain L20), this protein is Large ribosomal subunit protein uL4.